The primary structure comprises 1012 residues: DNA polymerase catalytic subunit (1012 aa).

The interval Met-1 to Pro-31 is disordered. Residues Gln-21–Pro-31 are compositionally biased toward low complexity.

This sequence belongs to the DNA polymerase type-B family. In terms of assembly, forms a complex with the ssDNA-binding protein, the DNA polymerase processivity factor, and the alkaline exonuclease. Interacts with the putative helicase-primase complex subunit; this interaction may coordinate leading and lagging strand DNA synthesis at the replication fork.

The protein resides in the host nucleus. It carries out the reaction DNA(n) + a 2'-deoxyribonucleoside 5'-triphosphate = DNA(n+1) + diphosphate. It catalyses the reaction Endonucleolytic cleavage to 5'-phosphomonoester.. Its function is as follows. Replicates viral genomic DNA. The replication complex is composed of six viral proteins: the DNA polymerase, processivity factor, primase, primase-associated factor, helicase, and ssDNA-binding protein. Additionally, the polymerase contains an intrinsic ribonuclease H (RNase H) activity that specifically degrades RNA/DNA heteroduplexes or duplex DNA substrates in the 5' to 3' direction. Therefore, it can catalyze the excision of the RNA primers that initiate the synthesis of Okazaki fragments at a replication fork during viral DNA replication. The chain is DNA polymerase catalytic subunit (ORF9) from Human herpesvirus 8 type P (isolate GK18) (HHV-8).